We begin with the raw amino-acid sequence, 702 residues long: Elongation factor G (702 aa).

Residues 8 to 290 enclose the tr-type G domain; that stretch reads ERYRNIGISA…GVVEYLPSPV (283 aa). GTP is bound by residues 17–24, 88–92, and 142–145; these read AHIDAGKT, DTPGH, and NKMD.

The protein belongs to the TRAFAC class translation factor GTPase superfamily. Classic translation factor GTPase family. EF-G/EF-2 subfamily.

The protein localises to the cytoplasm. Its function is as follows. Catalyzes the GTP-dependent ribosomal translocation step during translation elongation. During this step, the ribosome changes from the pre-translocational (PRE) to the post-translocational (POST) state as the newly formed A-site-bound peptidyl-tRNA and P-site-bound deacylated tRNA move to the P and E sites, respectively. Catalyzes the coordinated movement of the two tRNA molecules, the mRNA and conformational changes in the ribosome. The polypeptide is Elongation factor G (Janthinobacterium sp. (strain Marseille) (Minibacterium massiliensis)).